Reading from the N-terminus, the 482-residue chain is Cis-aconitate decarboxylase-like protein oryM (482 aa).

The protein belongs to the PrpD family.

Its pathway is secondary metabolite biosynthesis. Cis-aconitate decarboxylase-like protein; part of the gene cluster that mediates the biosynthesis of oryzines, natural products with an unusual maleidride backbone. The two subunits of the fungal fatty acid synthase oryfasA and oryfasB probably form octenoic acid. This fatty acid is most likely activated by the acyl-CoA ligase oryP to give octenyl-CoA before the citrate synthase-like protein oryE catalyzes condensation with oxaloacetate to form tricarboxylic acid. The next steps of the pathways are conjectural, but a favorite possible route has been proposed, beginning with decarboxylation and concomitant dehydration by the decarboxylase oryM, followed by tautomerization, which may lead to the production of a diene intermediate. Reduction of this diene intermediate could give the known metabolite piliformic acid. On the pathway to oryzine B and oryzine A, however, hydroxylation of the diene by the alpha-ketoglutarate-dependent dioxygenase oryG and lactonisation by the lactonohydrolases oryH or oryL could give oryzine B directly. Finally, enoyl reduction by the dehydrogenase oryD would then convert oryzine B into oryzine A. The polypeptide is Cis-aconitate decarboxylase-like protein oryM (Aspergillus oryzae (strain ATCC 42149 / RIB 40) (Yellow koji mold)).